Here is a 166-residue protein sequence, read N- to C-terminus: Co-chaperone protein HscB homolog (166 aa).

One can recognise a J domain in the interval 3 to 75 (QYFTLFRIEP…IDRAAYLLKT (73 aa)).

Belongs to the HscB family. Interacts with HscA and stimulates its ATPase activity.

Co-chaperone involved in the maturation of iron-sulfur cluster-containing proteins. Seems to help targeting proteins to be folded toward HscA. The polypeptide is Co-chaperone protein HscB homolog (Neisseria gonorrhoeae (strain NCCP11945)).